The following is a 281-amino-acid chain: Inositol diphosphatase SIW14 (281 aa).

Residues 1–20 form a disordered region; the sequence is MGLYQAKNDEGSDPKSSSKI. Residues 7–20 are compositionally biased toward basic and acidic residues; that stretch reads KNDEGSDPKSSSKI. A Phosphoserine modification is found at Ser94. A Tyrosine-protein phosphatase domain is found at 121-271; it reads NFSHVVGEIY…YDDDEIKRIA (151 aa). 3 residues coordinate 1D-myo-inositol hexakisphosphate: Asn189, Ile190, and His193. Cys214 acts as the Phosphocysteine intermediate in catalysis.

The protein belongs to the protein-tyrosine phosphatase family. Atypical dual-specificity phosphatase Siw14-like subfamily. As to quaternary structure, monomer.

The protein resides in the cytoplasm. It carries out the reaction 5-diphospho-1D-myo-inositol 1,2,3,4,6-pentakisphosphate + H2O = 1D-myo-inositol hexakisphosphate + phosphate + H(+). The catalysed reaction is 5-diphospho-1D-myo-inositol 1,3,4,6-tetrakisphosphate + H2O = 1D-myo-inositol 1,3,4,5,6-pentakisphosphate + phosphate + H(+). It catalyses the reaction 3,5-bis(diphospho)-1D-myo-inositol 1,2,4,6-tetrakisphosphate + H2O = 3-diphospho-1D-myo-inositol 1,2,4,5,6-pentakisphosphate + phosphate + 2 H(+). The enzyme catalyses 1,5-bis(diphospho)-1D-myo-inositol 2,3,4,6-tetrakisphosphate + H2O = 1-diphospho-1D-myo-inositol 2,3,4,5,6-pentakisphosphate + phosphate + 2 H(+). It carries out the reaction 6-diphospho-1D-myo-inositol pentakisphosphate + H2O = 1D-myo-inositol hexakisphosphate + phosphate + H(+). Its function is as follows. Selectively cleaves the beta-phosphate at the 5-position of soluble inositol pyrophosphates. Converts 5-diphosphoinositol tetrakisphosphate (5-PP-InsP(4)) into inositol pentakisphosphate (InsP(5)), 5-diphosphoinositol pentakisphosphate (5-PP-IP(5) or 5-InsP(7)) into inositol hexakisphosphate (IP(6) or InsP(6)), and 1,5-bisdiphosphoinositol tetrakisphosphate (1,5-PP-IP(5) or InsP(8)) into 1-diphosphoinositol pentakisphosphate (1-PP-IP(5) or 1-InsP(7)). Also has activity on 1,5-bis-diphosphoinositol 2,3,4,6-tetrakisphosphate (1,5-InsP(8)) and 3,5-InsP(8). Modulates inositol pyrophosphate metabolism that may have an influence in stress response. Plays a role in actin filament organization and endocytosis. Functions as a prion suppressing factor possibly due to its phosphatase activity against inositol pyrophosphates, which are signal transduction molecules involved in prion propagation. The protein is Inositol diphosphatase SIW14 (SIW14) of Saccharomyces cerevisiae (strain ATCC 204508 / S288c) (Baker's yeast).